We begin with the raw amino-acid sequence, 308 residues long: Putative ankyrin repeat protein R835 (308 aa).

ANK repeat units lie at residues 100 to 129, 152 to 181, 190 to 217, 218 to 247, 249 to 277, and 279 to 305; these read DINEAIKNIIIVNNIDSLKYLLEKGANIDL, PMNKFLPIAVEYGHLNLVKFLVEKGVYVDF, SEYTPLVAACSAGHIKIVEYLIEKGANY, KSSYGVYLAAEKGHYDIVKFLIDKGTDLEK, GLRSLNEVIKKGHFDIMKLFINSGLEIDY, and YYIYKAGLRGHTDIVKYLVMMQMSKQI.

The chain is Putative ankyrin repeat protein R835 from Acanthamoeba polyphaga (Amoeba).